The sequence spans 99 residues: uncharacterized protein (99 aa).

The segment at Met-1–Phe-99 is disordered. Over residues Gln-19 to Glu-29 the composition is skewed to polar residues.

This is an uncharacterized protein from Schizosaccharomyces pombe (strain 972 / ATCC 24843) (Fission yeast).